Consider the following 435-residue polypeptide: tRNA modification GTPase MnmE (435 aa).

Residues Arg-24, Glu-85, and Arg-124 each coordinate (6S)-5-formyl-5,6,7,8-tetrahydrofolate. The TrmE-type G domain maps to 220–361 (GLVFTIVGAP…LRTALAERAR (142 aa)). A K(+)-binding site is contributed by Asn-230. GTP contacts are provided by residues 230–235 (NVGKSS), 249–255 (SAIAGTT), and 274–277 (DTAG). Residue Ser-234 coordinates Mg(2+). K(+) is bound by residues Ser-249, Ile-251, and Thr-254. Thr-255 is a Mg(2+) binding site. Lys-435 contacts (6S)-5-formyl-5,6,7,8-tetrahydrofolate.

The protein belongs to the TRAFAC class TrmE-Era-EngA-EngB-Septin-like GTPase superfamily. TrmE GTPase family. In terms of assembly, homodimer. Heterotetramer of two MnmE and two MnmG subunits. K(+) serves as cofactor.

It localises to the cytoplasm. Its function is as follows. Exhibits a very high intrinsic GTPase hydrolysis rate. Involved in the addition of a carboxymethylaminomethyl (cmnm) group at the wobble position (U34) of certain tRNAs, forming tRNA-cmnm(5)s(2)U34. This chain is tRNA modification GTPase MnmE, found in Gluconacetobacter diazotrophicus (strain ATCC 49037 / DSM 5601 / CCUG 37298 / CIP 103539 / LMG 7603 / PAl5).